A 743-amino-acid polypeptide reads, in one-letter code: Putative pentatricopeptide repeat-containing protein At1g68930 (743 aa).

PPR repeat units lie at residues 40–70 (ETFLYNNIVHAYALMKSSTYARRVFDRIPQP), 71–101 (NLFSWNNLLLAYSKAGLISEMESTFEKLPDR), 102–132 (DGVTWNVLIEGYSLSGLVGAAVKAYNTMMRD), 138–172 (TRVTLMTMLKLSSSNGHVSLGKQIHGQVIKLGFES), 173–203 (YLLVGSPLLYMYANVGCISDAKKVFYGLDDR), 204–233 (NTVMYNSLMGGLLACGMIEDALQLFRGMEK), 234–268 (DSVSWAAMIKGLAQNGLAKEAIECFREMKVQGLKM), 269–303 (DQYPFGSVLPACGGLGAINEGKQIHACIIRTNFQD), 304–334 (HIYVGSALIDMYCKCKCLHYAKTVFDRMKQK), 335–369 (NVVSWTAMVVGYGQTGRAEEAVKIFLDMQRSGIDP), 370–404 (DHYTLGQAISACANVSSLEEGSQFHGKAITSGLIH), 405–435 (YVTVSNSLVTLYGKCGDIDDSTRLFNEMNVR), 436–470 (DAVSWTAMVSAYAQFGRAVETIQLFDKMVQHGLKP), 471–506 (DGVTLTGVISACSRAGLVEKGQRYFKLMTSEYGIVP), and 507–537 (SIGHYSCMIDLFSRSGRLEEAMRFINGMPFP). Positions 542-617 (GWTTLLSACR…EPGQSWIKWK (76 aa)) are type E motif. The interval 618-648 (GKLHSFSADDESSPYLDQIYAKLEELNNKII) is type E(+) motif. Residues 649 to 743 (DNGYKPDTSF…DGTCSCGDFW (95 aa)) are type DYW motif.

This sequence belongs to the PPR family. PCMP-H subfamily.

This is Putative pentatricopeptide repeat-containing protein At1g68930 (PCMP-H22) from Arabidopsis thaliana (Mouse-ear cress).